A 503-amino-acid polypeptide reads, in one-letter code: Cytochrome P450 11B1, mitochondrial (503 aa).

The N-terminal 24 residues, 1-24 (MALWAKARVWMAGPWLSLHRARPL), are a transit peptide targeting the mitochondrion. Cys450 contributes to the heme binding site.

This sequence belongs to the cytochrome P450 family. Heme is required as a cofactor.

It is found in the mitochondrion inner membrane. The catalysed reaction is a steroid + 2 reduced [adrenodoxin] + O2 + 2 H(+) = an 11beta-hydroxysteroid + 2 oxidized [adrenodoxin] + H2O. It carries out the reaction 11-deoxycortisol + 2 reduced [adrenodoxin] + O2 + 2 H(+) = cortisol + 2 oxidized [adrenodoxin] + H2O. It catalyses the reaction 21-hydroxyprogesterone + 2 reduced [adrenodoxin] + O2 + 2 H(+) = corticosterone + 2 oxidized [adrenodoxin] + H2O. The enzyme catalyses corticosterone + 2 reduced [adrenodoxin] + O2 + 2 H(+) = 18-hydroxycorticosterone + 2 oxidized [adrenodoxin] + H2O. The catalysed reaction is 18-hydroxycorticosterone + 2 reduced [adrenodoxin] + O2 + 2 H(+) = aldosterone + 2 oxidized [adrenodoxin] + 2 H2O. It carries out the reaction 21-hydroxyprogesterone + 2 reduced [adrenodoxin] + O2 + 2 H(+) = 19-hydroxy-11-deoxycorticosterone + 2 oxidized [adrenodoxin] + H2O. It catalyses the reaction 19-hydroxy-11-deoxycorticosterone + 2 reduced [adrenodoxin] + O2 + 2 H(+) = 19-oxo-11-deoxycorticosterone + 2 oxidized [adrenodoxin] + 2 H2O. Its pathway is steroid biosynthesis; glucocorticoid biosynthesis. It functions in the pathway steroid hormone biosynthesis. Its function is as follows. A cytochrome P450 monooxygenase that catalyzes the biosynthesis of aldosterone and other adrenal corticoids. Differing from other species (such as human, rat and mice), it is able to catalyze three sequential oxidative reactions of 11-deoxycorticosterone (21-hydroxyprogesterone), namely 11-beta hydroxylation, followed by two successive oxidations at C18 yielding 18-hydroxy and then 18-oxo intermediates, and ending with the formation of aldosterone. Steroid 11beta, 18- and 19-hydroxylase. Mechanistically, uses molecular oxygen inserting one oxygen atom into a substrate and reducing the second into a water molecule. Two electrons are provided by NADPH via a two-protein mitochondrial transfer system comprising flavoprotein FDXR (adrenodoxin/ferredoxin reductase) and nonheme iron-sulfur protein FDX1 or FDX2 (adrenodoxin/ferredoxin). This Ovis aries (Sheep) protein is Cytochrome P450 11B1, mitochondrial (CYP11B1).